The chain runs to 257 residues: Putative cysteine-rich repeat secretory protein 28 (257 aa).

The signal sequence occupies residues methionine 1–serine 26. 2 consecutive Gnk2-homologous domains span residues alanine 32 to serine 136 and tyrosine 142 to phenylalanine 254.

Belongs to the cysteine-rich repeat secretory protein family.

The protein resides in the secreted. The sequence is that of Putative cysteine-rich repeat secretory protein 28 (CRRSP28) from Arabidopsis thaliana (Mouse-ear cress).